Here is a 223-residue protein sequence, read N- to C-terminus: Ribonuclease T (223 aa).

An Exonuclease domain is found at 20 to 194 (VVIDVETAGF…YDTEQTALLF (175 aa)). Mg(2+)-binding residues include aspartate 23, glutamate 25, histidine 181, and aspartate 186. Histidine 181 functions as the Proton donor/acceptor in the catalytic mechanism.

It belongs to the RNase T family. As to quaternary structure, homodimer. Requires Mg(2+) as cofactor.

Trims short 3' overhangs of a variety of RNA species, leaving a one or two nucleotide 3' overhang. Responsible for the end-turnover of tRNA: specifically removes the terminal AMP residue from uncharged tRNA (tRNA-C-C-A). Also appears to be involved in tRNA biosynthesis. This is Ribonuclease T from Cronobacter sakazakii (strain ATCC BAA-894) (Enterobacter sakazakii).